Consider the following 129-residue polypeptide: HTH-type transcriptional regulator HmrR (129 aa).

One can recognise an HTH merR-type domain in the interval 1-68; the sequence is MNIGEASERS…VEECRQLLAL (68 aa). Positions 4–23 form a DNA-binding region, H-T-H motif; the sequence is GEASERSGLPSKTIRYYEDI.

Homodimer.

It is found in the cytoplasm. Its function is as follows. Regulates the transcription of actP. It detects cytoplasmic copper stress and activates transcription in response to increasing copper concentrations. In the absence of copper, it negatively regulates the transcription of actP. This chain is HTH-type transcriptional regulator HmrR (hmrR), found in Rhizobium leguminosarum bv. viciae.